A 430-amino-acid chain; its full sequence is Enolase (430 aa).

Gln-163 contacts (2R)-2-phosphoglycerate. The Proton donor role is filled by Glu-205. 3 residues coordinate Mg(2+): Asp-242, Glu-287, and Asp-314. (2R)-2-phosphoglycerate contacts are provided by Lys-339, Arg-368, Ser-369, and Lys-390. The active-site Proton acceptor is the Lys-339.

It belongs to the enolase family. Requires Mg(2+) as cofactor.

It localises to the cytoplasm. The protein localises to the secreted. The protein resides in the cell surface. It carries out the reaction (2R)-2-phosphoglycerate = phosphoenolpyruvate + H2O. It functions in the pathway carbohydrate degradation; glycolysis; pyruvate from D-glyceraldehyde 3-phosphate: step 4/5. In terms of biological role, catalyzes the reversible conversion of 2-phosphoglycerate (2-PG) into phosphoenolpyruvate (PEP). It is essential for the degradation of carbohydrates via glycolysis. This chain is Enolase, found in Geobacillus kaustophilus (strain HTA426).